A 585-amino-acid polypeptide reads, in one-letter code: Neopullulanase 2 (585 aa).

The Ca(2+) site is built by asparagine 143, aspartate 145, asparagine 148, aspartate 149, glycine 169, and aspartate 171. Substrate is bound by residues histidine 244 and arginine 323. Aspartate 325 functions as the Nucleophile in the catalytic mechanism. The active-site Proton donor is the glutamate 354. Residues 420–421 (HD), aspartate 465, and arginine 469 each bind substrate.

It belongs to the glycosyl hydrolase 13 family. In terms of assembly, monomer. It depends on Ca(2+) as a cofactor.

It catalyses the reaction Hydrolysis of pullulan to panose (6-alpha-D-glucosylmaltose).. Hydrolyzes pullulan efficiently but only a small amount of starch. Endohydrolysis of 1,4-alpha-glucosidic linkages in pullulan to form panose. Also cleaves (1-6)-alpha-glucosidic linkages to form maltotriose. The sequence is that of Neopullulanase 2 (tvaII) from Thermoactinomyces vulgaris.